A 301-amino-acid chain; its full sequence is Hydroxymycolate synthase MmaA4 (301 aa).

S-adenosyl-L-methionine contacts are provided by residues 42–43 (YS), 81–83 (GCG), 103–108 (TLSKNQ), 132–133 (WE), and Ile145. Residue Cys278 is part of the active site.

Belongs to the CFA/CMAS family. In terms of assembly, monomer.

It participates in lipid metabolism; mycolic acid biosynthesis. In terms of biological role, involved in the biosynthesis of hydroxymycolate, a common precursor of oxygenated mycolic acids (methoxymycolate and ketomycolate). Probably transfers a methyl group from the S-adenosylmethionine (SAM) cofactor and, subsequently or simultaneously, a water molecule onto the double bound of ethylene substrates, leading to the formation of the hydroxylated product at the distal position. The protein is Hydroxymycolate synthase MmaA4 (cmaA) of Mycobacterium bovis (strain ATCC BAA-935 / AF2122/97).